The sequence spans 212 residues: Eukaryotic translation initiation factor 4E-4 (212 aa).

Cysteine 143 and cysteine 147 are oxidised to a cystine.

This sequence belongs to the eukaryotic initiation factor 4E family. As to quaternary structure, eIF4F is a multi-subunit complex, the composition of which varies with external and internal environmental conditions. It is composed of at least eIF4A, eIF4E and eIF4G. eIF4E is also known to interact with other partners. Enriched in somatic cells.

Functionally, recognizes and binds the 7-methylguanosine-containing mRNA cap during an early step in the initiation of protein synthesis and facilitates ribosome binding by inducing the unwinding of the mRNAs secondary structures. All 5 eIF4E proteins bind monomethyl cap structures. Only ife-1, ife-2 and ife-5 bind trimethyl cap structures which result from trans-splicing. Translation of trimethyl cap structure mRNAs may be regulated by intracellular redox state; disulfide bonds change the width and depth of the cap-binding cavity determining selectivity to mRNA caps. The chain is Eukaryotic translation initiation factor 4E-4 (ife-4) from Caenorhabditis elegans.